A 462-amino-acid chain; its full sequence is Ketoisovalerate reductase (462 aa).

Residues 34-55 form a disordered region; that stretch reads PTAVKPDRADRGDFDPGKYPVD. A compositionally biased stretch (basic and acidic residues) spans 38–49; sequence KPDRADRGDFDP. Position 72–77 (72–77) interacts with NADP(+); the sequence is GPGNVG. The Calmoduling-binding motif lies at 167 to 184; it reads ADRLRRYLGRCSSVVFAQ. Lysine 290 (proton donor) is an active-site residue. The substrate site is built by asparagine 294, asparagine 298, and serine 403. Glutamate 415 serves as a coordination point for NADP(+).

The protein belongs to the ketopantoate reductase family. In terms of assembly, homodimer. Binds to calmodulin in a calcium-independent manner.

The enzyme catalyses (R)-2-hydroxy-3-methylbutanoate + NADP(+) = 3-methyl-2-oxobutanoate + NADPH + H(+). Its activity is regulated as follows. Environmental stimuli such as light and salt stress suppress activity through stimulation of calmodulin (CaM) that binds BEA2 and probably impairs its dimerization. In terms of biological role, ketoisovalerate reductase; part of the gene cluster that mediates the biosynthesis of beauvericin (BEA), a non-ribosomal cyclic hexadepsipeptide that shows antibiotic, antifungal, insecticidal, and cancer cell antiproliferative and antihaptotactic activity. Ketoisovalerate reductase BEA2 catalyzes the NADPH-specific reduction of ketoisovaleric acid to hydroxyisovalerate, a precursor for beauvericin biosynthesis. The nonribosomal cyclodepsipeptide synthetase BEA1 then catalyzes the formation of beauvericin via condensation and cyclization of 3 dipeptidol monomers, each composed of one unit of hydroxyisovalerate and one unit of N-methyl-phenylalanine. The protein is Ketoisovalerate reductase of Beauveria bassiana (White muscardine disease fungus).